Here is a 640-residue protein sequence, read N- to C-terminus: Probable potassium transport system protein Kup 1 (640 aa).

12 consecutive transmembrane segments (helical) span residues 24–44, 67–87, 116–136, 154–174, 186–206, 222–242, 264–284, 296–316, 354–374, 382–402, 411–431, and 436–456; these read LGAL…TSPL, IASL…VLFV, VGPL…DGMI, PFFA…LFTI, FGPV…TEVV, TFLF…VLAV, WFAL…ALIL, MLVP…ATVI, IYIP…VVGF, AAYG…ALVV, LWLC…FLGA, and VTQG…LMAT.

This sequence belongs to the HAK/KUP transporter (TC 2.A.72) family.

It localises to the cell inner membrane. It carries out the reaction K(+)(in) + H(+)(in) = K(+)(out) + H(+)(out). Functionally, transport of potassium into the cell. Likely operates as a K(+):H(+) symporter. In Paramagnetospirillum magneticum (strain ATCC 700264 / AMB-1) (Magnetospirillum magneticum), this protein is Probable potassium transport system protein Kup 1.